Consider the following 397-residue polypeptide: Dual oxidase maturation factor 1 (397 aa).

Helical transmembrane passes span 26 to 46 (FVIFSVFLIPLIAYILILPGV) and 57 to 77 (YVLMLAVGGALIASLIYPCWA). N109 carries N-linked (GlcNAc...) asparagine glycosylation. 3 consecutive transmembrane segments (helical) span residues 191–211 (AAIWFAFACWCLSVVLMLFLP), 218–238 (ILATGISCLIACLVYLLLSPC), and 261–281 (CFYLIFAIGILCVLCGLGLGI). Positions 324–376 (YGTNTTNSSRDKNDISSDKTAGSSGFQSRTSTCQSSASSASLRSQSSIETVHD) are disordered. Residues N327 and N330 are each glycosylated (N-linked (GlcNAc...) asparagine). The segment covering 341 to 350 (DKTAGSSGFQ) has biased composition (polar residues). Residues 351-370 (SRTSTCQSSASSASLRSQSS) show a composition bias toward low complexity.

Belongs to the DUOXA family. Interacts with bli-3 and tsp-15. Interacts with csnk-1. Expressed in the hypodermis, specifically in seam cells, the terminal bulb of the pharynx, the distal region of the gonadal arm, vulva, spermatheca and uterus.

The protein localises to the membrane. Plays a role in cuticle biogenesis. In complex with tsp-15 and the dual oxidase bli-3, promotes the generation of reactive oxygen species (ROS) and tyrosine cross-linking of collagen, thus stabilizing cuticular extracellular matrix. This chain is Dual oxidase maturation factor 1, found in Caenorhabditis elegans.